The following is a 189-amino-acid chain: dCTP deaminase (189 aa).

DCTP is bound by residues 112–117 (KSTYAR), 136–138 (TLE), glutamine 157, tyrosine 171, and glutamine 181. The Proton donor/acceptor role is filled by glutamate 138.

The protein belongs to the dCTP deaminase family. As to quaternary structure, homotrimer.

The enzyme catalyses dCTP + H2O + H(+) = dUTP + NH4(+). It functions in the pathway pyrimidine metabolism; dUMP biosynthesis; dUMP from dCTP (dUTP route): step 1/2. Its function is as follows. Catalyzes the deamination of dCTP to dUTP. In Acinetobacter baylyi (strain ATCC 33305 / BD413 / ADP1), this protein is dCTP deaminase.